We begin with the raw amino-acid sequence, 285 residues long: OPEP-3 protein (285 aa).

In Orgyia pseudotsugata multicapsid polyhedrosis virus (OpMNPV), this protein is OPEP-3 protein (OPEP-3).